The primary structure comprises 253 residues: 3-dehydroquinate dehydratase (253 aa).

3-dehydroquinate-binding positions include 46 to 48 (EFR) and Arg-82. Catalysis depends on His-143, which acts as the Proton donor/acceptor. Catalysis depends on Lys-170, which acts as the Schiff-base intermediate with substrate. Positions 213, 232, and 236 each coordinate 3-dehydroquinate.

This sequence belongs to the type-I 3-dehydroquinase family. As to quaternary structure, homodimer.

The enzyme catalyses 3-dehydroquinate = 3-dehydroshikimate + H2O. Its pathway is metabolic intermediate biosynthesis; chorismate biosynthesis; chorismate from D-erythrose 4-phosphate and phosphoenolpyruvate: step 3/7. Its function is as follows. Involved in the third step of the chorismate pathway, which leads to the biosynthesis of aromatic amino acids. Catalyzes the cis-dehydration of 3-dehydroquinate (DHQ) and introduces the first double bond of the aromatic ring to yield 3-dehydroshikimate. The polypeptide is 3-dehydroquinate dehydratase (Clostridium novyi (strain NT)).